Consider the following 193-residue polypeptide: Acyl carrier protein phosphodiesterase (193 aa).

This sequence belongs to the AcpH family.

The enzyme catalyses holo-[ACP] + H2O = apo-[ACP] + (R)-4'-phosphopantetheine + H(+). Its function is as follows. Converts holo-ACP to apo-ACP by hydrolytic cleavage of the phosphopantetheine prosthetic group from ACP. This is Acyl carrier protein phosphodiesterase from Shigella boydii serotype 4 (strain Sb227).